Here is a 452-residue protein sequence, read N- to C-terminus: tRNA modification GTPase MnmE (452 aa).

Positions 21, 78, and 118 each coordinate (6S)-5-formyl-5,6,7,8-tetrahydrofolate. The TrmE-type G domain occupies 214–375; sequence GMKVVIAGRP…LREHLKQAMG (162 aa). Asn224 lines the K(+) pocket. Residues 224-229, 243-249, and 268-271 contribute to the GTP site; these read NAGKSS, TDIAGTT, and DTAG. Ser228 is a Mg(2+) binding site. 3 residues coordinate K(+): Thr243, Ile245, and Thr248. Thr249 contributes to the Mg(2+) binding site. Lys452 contacts (6S)-5-formyl-5,6,7,8-tetrahydrofolate.

It belongs to the TRAFAC class TrmE-Era-EngA-EngB-Septin-like GTPase superfamily. TrmE GTPase family. As to quaternary structure, homodimer. Heterotetramer of two MnmE and two MnmG subunits. The cofactor is K(+).

It localises to the cytoplasm. Its function is as follows. Exhibits a very high intrinsic GTPase hydrolysis rate. Involved in the addition of a carboxymethylaminomethyl (cmnm) group at the wobble position (U34) of certain tRNAs, forming tRNA-cmnm(5)s(2)U34. This Haemophilus influenzae (strain PittEE) protein is tRNA modification GTPase MnmE.